Reading from the N-terminus, the 367-residue chain is tRNA uridine(34) hydroxylase (367 aa).

Residues 159 to 249 form the Rhodanese domain; sequence EDKNSIVVDV…GIISYAHEIS (91 aa). Residue C213 is the Cysteine persulfide intermediate of the active site.

The protein belongs to the TrhO family.

It carries out the reaction uridine(34) in tRNA + AH2 + O2 = 5-hydroxyuridine(34) in tRNA + A + H2O. In terms of biological role, catalyzes oxygen-dependent 5-hydroxyuridine (ho5U) modification at position 34 in tRNAs. This is tRNA uridine(34) hydroxylase from Leptospira borgpetersenii serovar Hardjo-bovis (strain L550).